The following is a 99-amino-acid chain: Integration host factor subunit alpha (99 aa).

This sequence belongs to the bacterial histone-like protein family. In terms of assembly, heterodimer of an alpha and a beta chain.

Functionally, this protein is one of the two subunits of integration host factor, a specific DNA-binding protein that functions in genetic recombination as well as in transcriptional and translational control. The sequence is that of Integration host factor subunit alpha from Stenotrophomonas maltophilia (strain R551-3).